A 450-amino-acid polypeptide reads, in one-letter code: Phosphoglucosamine mutase 2 (450 aa).

Serine 101 serves as the catalytic Phosphoserine intermediate. Mg(2+)-binding residues include serine 101, aspartate 245, aspartate 247, and aspartate 249. Serine 101 is modified (phosphoserine).

It belongs to the phosphohexose mutase family. Requires Mg(2+) as cofactor. Activated by phosphorylation.

It catalyses the reaction alpha-D-glucosamine 1-phosphate = D-glucosamine 6-phosphate. Functionally, catalyzes the conversion of glucosamine-6-phosphate to glucosamine-1-phosphate. In Shewanella sp. (strain MR-7), this protein is Phosphoglucosamine mutase 2.